Consider the following 235-residue polypeptide: 5'-methylthioadenosine/S-adenosylhomocysteine nucleosidase (235 aa).

The Proton acceptor role is filled by Glu-12. Residues Gly-78, Met-153, and 174 to 175 each bind substrate; that span reads ME. Residue Asp-198 is the Proton donor of the active site.

It belongs to the PNP/UDP phosphorylase family. MtnN subfamily.

It catalyses the reaction S-adenosyl-L-homocysteine + H2O = S-(5-deoxy-D-ribos-5-yl)-L-homocysteine + adenine. The catalysed reaction is S-methyl-5'-thioadenosine + H2O = 5-(methylsulfanyl)-D-ribose + adenine. The enzyme catalyses 5'-deoxyadenosine + H2O = 5-deoxy-D-ribose + adenine. It functions in the pathway amino-acid biosynthesis; L-methionine biosynthesis via salvage pathway; S-methyl-5-thio-alpha-D-ribose 1-phosphate from S-methyl-5'-thioadenosine (hydrolase route): step 1/2. Its function is as follows. Catalyzes the irreversible cleavage of the glycosidic bond in both 5'-methylthioadenosine (MTA) and S-adenosylhomocysteine (SAH/AdoHcy) to adenine and the corresponding thioribose, 5'-methylthioribose and S-ribosylhomocysteine, respectively. Also cleaves 5'-deoxyadenosine, a toxic by-product of radical S-adenosylmethionine (SAM) enzymes, into 5-deoxyribose and adenine. This is 5'-methylthioadenosine/S-adenosylhomocysteine nucleosidase from Geobacillus kaustophilus (strain HTA426).